The following is a 434-amino-acid chain: MLKPLCVVIGTTGAGKSDLAVQLAKRFGSQVINADSMQIYRGFDTITNKITVEEQENVHHRLMSFLNFDKEYSVPEFERDASRVIDEIHSQGKIPIVVGGTHYYLQSLLFEDTTLSAIDKLTNDSSPSKPPHPDSHILDDDPSAMLSYLKKIDPVMAEQWHPRDTRKIRRSLEIYFHTGRPPSEIYSEQKMKSSGSKLRYKSLIFWAFADSLVLMPRLDKRVDKMLSHGLVDEIKSMKSLAESEKFSPDFTRGIWQCIGFKEFMPWFEAPSDIVFNDCLERMKVSTRQYAKSQKKWIQSRFLPMCLAQQDLSPSSILFSTTNTTDLNNWEEQVEKACRVFQYFFYNGDAIAPSADDQHAFEKARDYLSIMNGRQSQKKKFVCEECLDKRGDPFTVIGEDAFNVHIKSRKHKTTVRRKKERAERQIRLKNIGILK.

Residue 10-17 (GTTGAGKS) participates in ATP binding. A substrate-binding site is contributed by 12-17 (TGAGKS). 2 interaction with substrate tRNA regions span residues 35–38 (DSMQ) and 166–170 (RKIRR). The tract at residues 211 to 233 (SLVLMPRLDKRVDKMLSHGLVDE) is interaction with isopentenylpyrophosphate transferase. Interaction with substrate tRNA regions lie at residues 256 to 258 (QCI), 281 to 299 (RMKV…WIQS), and 291 to 298 (KSQKKWIQ). The Matrin-type zinc finger occupies 380–416 (FVCEECLDKRGDPFTVIGEDAFNVHIKSRKHKTTVRR).

Belongs to the IPP transferase family.

The protein localises to the mitochondrion. Its subcellular location is the cytoplasm. The protein resides in the nucleus. It catalyses the reaction adenosine(37) in tRNA + dimethylallyl diphosphate = N(6)-dimethylallyladenosine(37) in tRNA + diphosphate. Its function is as follows. Catalyzes the transfer of a dimethylallyl group onto the adenine at position 37 of both cytosolic and mitochondrial tRNAs, leading to the formation of N6-(dimethylallyl)adenosine (i(6)A). The polypeptide is tRNA dimethylallyltransferase (tit1) (Schizosaccharomyces pombe (strain 972 / ATCC 24843) (Fission yeast)).